The primary structure comprises 106 residues: MGLCNTNLTLSAAQATPEAVEYTEILEAEDRPWVTVVWDDPVNLMHYVTYIFQKLFGYSKAKATELMLQVHNEGKAVVSSGSRDKMEHDVRRLHAAGLWATMQRDD.

Belongs to the ClpS family. In terms of assembly, binds to the N-terminal domain of the chaperone ClpA.

Involved in the modulation of the specificity of the ClpAP-mediated ATP-dependent protein degradation. This is ATP-dependent Clp protease adapter protein ClpS from Nocardia farcinica (strain IFM 10152).